The chain runs to 459 residues: Cysteine--tRNA ligase (459 aa).

Cysteine 28 is a binding site for Zn(2+). A 'HIGH' region motif is present at residues 30–40 (VTIYDLCHIGH). Residues cysteine 209, histidine 234, and glutamate 238 each contribute to the Zn(2+) site. A 'KMSKS' region motif is present at residues 266-270 (KMSKS). An ATP-binding site is contributed by lysine 269.

Belongs to the class-I aminoacyl-tRNA synthetase family. As to quaternary structure, monomer. Zn(2+) is required as a cofactor.

The protein resides in the cytoplasm. The enzyme catalyses tRNA(Cys) + L-cysteine + ATP = L-cysteinyl-tRNA(Cys) + AMP + diphosphate. The chain is Cysteine--tRNA ligase from Vibrio cholerae serotype O1 (strain ATCC 39541 / Classical Ogawa 395 / O395).